The sequence spans 562 residues: Protein wntless (562 aa).

Over M1–K13 the chain is Cytoplasmic. Residues L14–L34 form a helical membrane-spanning segment. Over Y35–Q239 the chain is Lumenal. N58 carries an N-linked (GlcNAc...) asparagine glycan. Residues I240–W260 form a helical membrane-spanning segment. Residues R261–P270 lie on the Cytoplasmic side of the membrane. Residues A271–L291 form a helical membrane-spanning segment. Topologically, residues E292–Q311 are lumenal. A helical transmembrane segment spans residues G312–I332. Residues Q333–R344 are Cytoplasmic-facing. Residues Y345–C365 traverse the membrane as a helical segment. The Lumenal portion of the chain corresponds to E366–T390. Residues F391–W411 traverse the membrane as a helical segment. The Cytoplasmic segment spans residues K412–R441. A helical transmembrane segment spans residues F442–M462. Residues G463–S482 lie on the Lumenal side of the membrane. A helical membrane pass occupies residues A483–Y503. Residues A504–D562 are Cytoplasmic-facing. Residues H539 to D562 form a disordered region. Positions P541 to T556 are enriched in polar residues.

It belongs to the wntless family. As to quaternary structure, interacts with wg; in the Golgi. Interacts with Vps35, a component of the retromer complex; wls stability is regulated by Vps35.

The protein resides in the presynaptic cell membrane. The protein localises to the postsynaptic cell membrane. It is found in the cell membrane. Its subcellular location is the endoplasmic reticulum membrane. It localises to the endosome membrane. The protein resides in the golgi apparatus membrane. A segment polarity gene required for wingless (wg)-dependent patterning processes, acting in both wg-sending cells and wg-target cells. In non-neuronal cells wls directs wg secretion. The wls traffic loop encompasses the Golgi, the cell surface, an endocytic compartment and a retrograde route leading back to the Golgi, and involves clathrin-mediated endocytosis and the retromer complex (a conserved protein complex consisting of Vps35 and Vps26). In neuronal cells (the larval motorneuron NMJ), the wg signal moves across the synapse via the release of wls-containing exosome-like vesicles. Postsynaptic wls is required for the trafficking of fz2 through the fz2-interacting protein Grip. The chain is Protein wntless from Drosophila erecta (Fruit fly).